The chain runs to 179 residues: Large ribosomal subunit protein uL6 (179 aa).

Belongs to the universal ribosomal protein uL6 family. In terms of assembly, part of the 50S ribosomal subunit.

Its function is as follows. This protein binds to the 23S rRNA, and is important in its secondary structure. It is located near the subunit interface in the base of the L7/L12 stalk, and near the tRNA binding site of the peptidyltransferase center. The chain is Large ribosomal subunit protein uL6 from Pelobacter propionicus (strain DSM 2379 / NBRC 103807 / OttBd1).